A 533-amino-acid chain; its full sequence is CTP synthase (533 aa).

Residues 1–265 (MTKFIFVTGG…PAYLARRLGL (265 aa)) are amidoligase domain. Residue Ser-13 participates in CTP binding. Ser-13 serves as a coordination point for UTP. 14–19 (GLGKGI) lines the ATP pocket. L-glutamine is bound at residue Tyr-54. Asp-71 contributes to the ATP binding site. Mg(2+) is bound by residues Asp-71 and Glu-139. Residues 146-148 (DIE), 186-191 (KTKPTQ), and Lys-222 each bind CTP. UTP is bound by residues 186–191 (KTKPTQ) and Lys-222. Residues 290-532 (EIAIVGKYVK…VEAAKKKKYG (243 aa)) form the Glutamine amidotransferase type-1 domain. Gly-351 contributes to the L-glutamine binding site. Cys-378 acts as the Nucleophile; for glutamine hydrolysis in catalysis. L-glutamine-binding positions include 379 to 382 (FGFQ), Glu-402, and Arg-459. Residues His-505 and Glu-507 contribute to the active site.

It belongs to the CTP synthase family. In terms of assembly, homotetramer.

It carries out the reaction UTP + L-glutamine + ATP + H2O = CTP + L-glutamate + ADP + phosphate + 2 H(+). It catalyses the reaction L-glutamine + H2O = L-glutamate + NH4(+). The enzyme catalyses UTP + NH4(+) + ATP = CTP + ADP + phosphate + 2 H(+). Its pathway is pyrimidine metabolism; CTP biosynthesis via de novo pathway; CTP from UDP: step 2/2. With respect to regulation, allosterically activated by GTP, when glutamine is the substrate; GTP has no effect on the reaction when ammonia is the substrate. The allosteric effector GTP functions by stabilizing the protein conformation that binds the tetrahedral intermediate(s) formed during glutamine hydrolysis. Inhibited by the product CTP, via allosteric rather than competitive inhibition. Its function is as follows. Catalyzes the ATP-dependent amination of UTP to CTP with either L-glutamine or ammonia as the source of nitrogen. Regulates intracellular CTP levels through interactions with the four ribonucleotide triphosphates. The protein is CTP synthase of Thermococcus kodakarensis (strain ATCC BAA-918 / JCM 12380 / KOD1) (Pyrococcus kodakaraensis (strain KOD1)).